A 447-amino-acid chain; its full sequence is MTFENLGGHAQRRDESAYRLGEEDGRQKGESSRKKRPPLSRKNPSNVSFWSNEPIIRHSSVKTDRPQFHRADSTVTEQSSEILFDGNAESAEPLSKRSPPFLAYTPKRAVSATLATTQSSPISTSFNPQLPSNSNTNRFDFGSESQLSSNYTNDTGLSLLSLPKSVPHSPAMHKRTPSSDPNNPFGSTFANKFLDHIPAEPLPLPARPQISDLSFFRKPSLPSALQNIVIEKNASQRSVSEPLHNLSSRYSHFTSPHIDDSQHFPPMEFFARSDELPNPFVPFFDLDSKPNLSTLQDNASLTSQGSNLSSQNSGLSSSSSGIFGRMPIPAQSLDTTMLRTDSNSNIRRATTSFIANSEKENSSNFIDPQKYASIKFKNGNGVSKFMFLFTFGIVFPPLWILASFLPIPRTKIHQMRVKHVHWRIINRVVACLGVAITFLFIGLGVSG.

3 disordered regions span residues 1–80 (MTFE…EQSS), 115–184 (ATTQ…PNNP), and 295–322 (LQDN…SSGI). Over residues 11 to 32 (QRRDESAYRLGEEDGRQKGESS) the composition is skewed to basic and acidic residues. The span at 42 to 51 (KNPSNVSFWS) shows a compositional bias: polar residues. Basic and acidic residues predominate over residues 61–72 (VKTDRPQFHRAD). Residues 115 to 158 (ATTQSSPISTSFNPQLPSNSNTNRFDFGSESQLSSNYTNDTGLS) are compositionally biased toward polar residues. Residues 300-321 (SLTSQGSNLSSQNSGLSSSSSG) show a composition bias toward low complexity. The next 2 helical transmembrane spans lie at 385 to 405 (FMFL…ASFL) and 424 to 444 (IINR…IGLG).

The protein localises to the membrane. This is an uncharacterized protein from Schizosaccharomyces pombe (strain 972 / ATCC 24843) (Fission yeast).